The sequence spans 466 residues: 5-hydroxytryptamine receptor (466 aa).

Residues 1–21 (MNASRLPGFNDTSQDQPYPTS) are disordered. At 1–66 (MNASRLPGFN…TSFVLMAVTS (66 aa)) the chain is on the extracellular side. Asparagine 2, asparagine 10, asparagine 29, asparagine 41, asparagine 45, and asparagine 50 each carry an N-linked (GlcNAc...) asparagine glycan. A compositionally biased stretch (polar residues) spans 10 to 21 (NDTSQDQPYPTS). Residues 67–89 (VVLALIILATIVGNVFVIAAIII) traverse the membrane as a helical segment. Topologically, residues 90-99 (ERNLQNVANY) are cytoplasmic. A helical transmembrane segment spans residues 100–121 (LVASLAVADLMVACLVMPLGAV). Over 122–136 (YEVSQGWILGPELCD) the chain is Extracellular. An intrachain disulfide couples cysteine 135 to cysteine 215. A helical transmembrane segment spans residues 137 to 158 (MWTSSDVLCSSASILHLVAIAT). Topologically, residues 159–177 (DRYWAVTDVDYIHIRNEKR) are cytoplasmic. A helical transmembrane segment spans residues 178–200 (IFTMIVLVWGAALVVSLAPQLGW). Residues 201–228 (KDPDYLARITQQQKCLVSQDLAYQIFAT) lie on the Extracellular side of the membrane. The chain crosses the membrane as a helical span at residues 229-250 (MSTFYVPLAVILILYWKIFQTA). At 251–386 (RRRIRRRRDP…AKRERKAAKT (136 aa)) the chain is on the cytoplasmic side. Disordered stretches follow at residues 255 to 282 (RRRRDPPPPRPTSADGATPSGRPVQSAR) and 339 to 360 (VPPSVSPEKSSSTVTNGSKPER). The segment covering 339–353 (VPPSVSPEKSSSTVT) has biased composition (low complexity). The chain crosses the membrane as a helical span at residues 387–410 (LAIITGAFVFCWLPFFIMALVMPI). Residues 411-419 (CQTCVISDY) are Extracellular-facing. The helical transmembrane segment at 420-442 (LASFFLWLGYFNSTLNPVIYTIF) threads the bilayer. At 443–466 (SPDFRQAFARILFGTHRRRRYKKF) the chain is on the cytoplasmic side.

This sequence belongs to the G-protein coupled receptor 1 family.

It localises to the cell membrane. In terms of biological role, this is a receptor for 5-hydroxytryptamine (serotonin), a biogenic hormone that function as a neurotransmitter, a hormone, and a mitogen. This chain is 5-hydroxytryptamine receptor, found in Heliothis virescens (Tobacco budworm moth).